Consider the following 309-residue polypeptide: Probable lipid kinase YegS-like (309 aa).

Residues 1-134 (MAPSHWRLIL…VDLLRIDADH (134 aa)) form the DAGKc domain. ATP contacts are provided by residues Thr39, 65 to 71 (GDGTLSE), and Thr96. The Mg(2+) site is built by Leu219, Asp222, and Leu224. The active-site Proton acceptor is the Glu280.

This sequence belongs to the diacylglycerol/lipid kinase family. YegS lipid kinase subfamily. The cofactor is Mg(2+). Ca(2+) is required as a cofactor.

The protein resides in the cytoplasm. Probably phosphorylates lipids; the in vivo substrate is unknown. The chain is Probable lipid kinase YegS-like from Xanthomonas axonopodis pv. citri (strain 306).